The sequence spans 423 residues: tRNA(Ile)-lysidine synthase (423 aa).

27 to 32 (SGGVDS) provides a ligand contact to ATP.

It belongs to the tRNA(Ile)-lysidine synthase family.

The protein localises to the cytoplasm. The catalysed reaction is cytidine(34) in tRNA(Ile2) + L-lysine + ATP = lysidine(34) in tRNA(Ile2) + AMP + diphosphate + H(+). Its function is as follows. Ligates lysine onto the cytidine present at position 34 of the AUA codon-specific tRNA(Ile) that contains the anticodon CAU, in an ATP-dependent manner. Cytidine is converted to lysidine, thus changing the amino acid specificity of the tRNA from methionine to isoleucine. The polypeptide is tRNA(Ile)-lysidine synthase (Streptococcus mutans serotype c (strain ATCC 700610 / UA159)).